Reading from the N-terminus, the 520-residue chain is Leucine aminopeptidase 1 (520 aa).

2 residues coordinate Mn(2+): Lys288 and Asp293. The active site involves Lys300. Residues Asp313, Asp373, and Glu375 each contribute to the Mn(2+) site. Residue Arg377 is part of the active site.

This sequence belongs to the peptidase M17 family. In terms of assembly, homohexamer (dimer of homotrimers). Mn(2+) is required as a cofactor.

The protein localises to the cytoplasm. The catalysed reaction is Release of an N-terminal amino acid, Xaa-|-Yaa-, in which Xaa is preferably Leu, but may be other amino acids including Pro although not Arg or Lys, and Yaa may be Pro. Amino acid amides and methyl esters are also readily hydrolyzed, but rates on arylamides are exceedingly low.. It carries out the reaction Release of N-terminal proline from a peptide.. Presumably involved in the processing and regular turnover of intracellular proteins. Catalyzes the removal of unsubstituted N-terminal amino acids from various peptides. Possesses leucine aminopeptidase activity against the model substrate leucine-amido methyl coumarin. Possesses Cys-Gly dipeptidase activity. In addition, can cleave Cys-Leu and Leu-Cys dipeptides. In terms of biological role, functions as a molecular chaperone to protect proteins from heat-induced damage. The chain is Leucine aminopeptidase 1 from Arabidopsis thaliana (Mouse-ear cress).